We begin with the raw amino-acid sequence, 508 residues long: Anthranilate synthase component 1 (508 aa).

Residues Ser49 and Pro282–Met284 contribute to the L-tryptophan site. Residue Gly317–Thr318 participates in chorismate binding. Glu344 contacts Mg(2+). Chorismate is bound by residues Tyr432, Arg452, Gly466–Gly468, and Gly468. Glu481 provides a ligand contact to Mg(2+).

This sequence belongs to the anthranilate synthase component I family. As to quaternary structure, heterotetramer consisting of two non-identical subunits: a beta subunit (TrpG) and a large alpha subunit (TrpE). The cofactor is Mg(2+).

It carries out the reaction chorismate + L-glutamine = anthranilate + pyruvate + L-glutamate + H(+). The protein operates within amino-acid biosynthesis; L-tryptophan biosynthesis; L-tryptophan from chorismate: step 1/5. Feedback inhibited by tryptophan. Part of a heterotetrameric complex that catalyzes the two-step biosynthesis of anthranilate, an intermediate in the biosynthesis of L-tryptophan. In the first step, the glutamine-binding beta subunit (TrpG) of anthranilate synthase (AS) provides the glutamine amidotransferase activity which generates ammonia as a substrate that, along with chorismate, is used in the second step, catalyzed by the large alpha subunit of AS (TrpE) to produce anthranilate. In the absence of TrpG, TrpE can synthesize anthranilate directly from chorismate and high concentrations of ammonia. This Geobacillus stearothermophilus (Bacillus stearothermophilus) protein is Anthranilate synthase component 1 (trpE).